The primary structure comprises 171 residues: UPF0398 protein spyM18_1659 (171 aa).

It belongs to the UPF0398 family.

The protein is UPF0398 protein spyM18_1659 of Streptococcus pyogenes serotype M18 (strain MGAS8232).